The primary structure comprises 396 residues: NDP-glycosyltransferase YjiC (396 aa).

UDP is bound by residues asparagine 18, threonine 234, valine 283, histidine 298, and asparagine 302–glutamate 306.

Belongs to the UDP-glycosyltransferase family.

The catalysed reaction is an NDP-glycose + an acceptor = a glycosylated acceptor + NDP.. Functionally, glycosyltransferase that can glycosylate a wide range of substrates, including various flavonoids (flavones, flavonols, flavanones, flavanols, chalcones), isoflavonoids and stilbenes, to produce multiple glycosylated products. It can accept diverse nucleotide diphosphate-D/L-sugars as donors, including ADP-, GDP-, CDP-, TDP- or UDP-alpha-D-glucose, and catalyzes O-, N-, or S-glycosylation. In vitro, catalyzes the glycosylation of, among others, apigenin, 3-hydroxyflavone, phloretin or resveratrol, resulting in multiple glucosylated products, along with mono-, di-, tri- and tetraglucosides. Can also catalyze the glycosylation of the macrolide epothilone A with diverse NDP-D/L-sugars, forming different epothilone A glycoside derivatives. The protein is NDP-glycosyltransferase YjiC of Bacillus licheniformis (strain ATCC 14580 / DSM 13 / JCM 2505 / CCUG 7422 / NBRC 12200 / NCIMB 9375 / NCTC 10341 / NRRL NRS-1264 / Gibson 46).